We begin with the raw amino-acid sequence, 551 residues long: UvrABC system protein C (551 aa).

Residues 12–87 (EKPGVYIFKN…IFKHKPKYNI (76 aa)) enclose the GIY-YIG domain. Residues 193 to 228 (EFVKDYIEQKMNYHSKMLDFENAAKYRDLLLSFEKL) enclose the UVR domain.

The protein belongs to the UvrC family. In terms of assembly, interacts with UvrB in an incision complex.

The protein localises to the cytoplasm. Functionally, the UvrABC repair system catalyzes the recognition and processing of DNA lesions. UvrC both incises the 5' and 3' sides of the lesion. The N-terminal half is responsible for the 3' incision and the C-terminal half is responsible for the 5' incision. The sequence is that of UvrABC system protein C from Thermosipho africanus (strain TCF52B).